The following is a 211-amino-acid chain: Cytochrome c biogenesis ATP-binding export protein CcmA 2 (211 aa).

Residues 6 to 208 form the ABC transporter domain; that stretch reads LEARELGVRR…GAVLDLATDA (203 aa). Position 38-45 (38-45) interacts with ATP; sequence GPNGAGKT.

This sequence belongs to the ABC transporter superfamily. CcmA exporter (TC 3.A.1.107) family. The complex is composed of two ATP-binding proteins (CcmA) and two transmembrane proteins (CcmB).

It localises to the cell inner membrane. The catalysed reaction is heme b(in) + ATP + H2O = heme b(out) + ADP + phosphate + H(+). Functionally, part of the ABC transporter complex CcmAB involved in the biogenesis of c-type cytochromes; once thought to export heme, this seems not to be the case, but its exact role is uncertain. Responsible for energy coupling to the transport system. In Cupriavidus metallidurans (strain ATCC 43123 / DSM 2839 / NBRC 102507 / CH34) (Ralstonia metallidurans), this protein is Cytochrome c biogenesis ATP-binding export protein CcmA 2.